The primary structure comprises 291 residues: Probable plasmid-partitioning protein ParB (291 aa).

This sequence belongs to the ParB family.

This chain is Probable plasmid-partitioning protein ParB, found in Deinococcus radiodurans (strain ATCC 13939 / DSM 20539 / JCM 16871 / CCUG 27074 / LMG 4051 / NBRC 15346 / NCIMB 9279 / VKM B-1422 / R1).